The following is a 54-amino-acid chain: Rubredoxin-1 (54 aa).

The Rubredoxin-like domain maps to 1–52 (MKKWECVVCGFIYDEAEGLPDEGIEPGTAWNNVPEDWVCPDCGVGKDDFEMV). Fe cation contacts are provided by Cys-6, Cys-9, Cys-39, and Cys-42.

The protein belongs to the rubredoxin family. Fe(3+) serves as cofactor.

It is found in the cytoplasm. Its pathway is hydrocarbon metabolism; alkane degradation. Its function is as follows. Involved in the hydrocarbon hydroxylating system, which transfers electrons from NADH to rubredoxin reductase and then through rubredoxin to alkane 1 monooxygenase. The chain is Rubredoxin-1 (rubA) from Alcanivorax borkumensis (strain ATCC 700651 / DSM 11573 / NCIMB 13689 / SK2).